Consider the following 349-residue polypeptide: Outer membrane protein assembly factor BamC (349 aa).

The N-terminal stretch at M1–A24 is a signal peptide. A lipid anchor (N-palmitoyl cysteine) is attached at C25. C25 is lipidated: S-diacylglycerol cysteine.

Belongs to the BamC family. In terms of assembly, part of the Bam complex, which is composed of the outer membrane protein BamA, and four lipoproteins BamB, BamC, BamD and BamE.

It is found in the cell outer membrane. Its function is as follows. Part of the outer membrane protein assembly complex, which is involved in assembly and insertion of beta-barrel proteins into the outer membrane. The chain is Outer membrane protein assembly factor BamC from Photorhabdus asymbiotica subsp. asymbiotica (strain ATCC 43949 / 3105-77) (Xenorhabdus luminescens (strain 2)).